Consider the following 327-residue polypeptide: Beta-ketoacyl-[acyl-carrier-protein] synthase III 2 (327 aa).

Residues Cys114 and His251 contribute to the active site. An ACP-binding region spans residues 252–256; the sequence is SANLR. Residue Asn281 is part of the active site.

Belongs to the thiolase-like superfamily. FabH family. In terms of assembly, homodimer.

The protein resides in the cytoplasm. It carries out the reaction malonyl-[ACP] + acetyl-CoA + H(+) = 3-oxobutanoyl-[ACP] + CO2 + CoA. It functions in the pathway lipid metabolism; fatty acid biosynthesis. Catalyzes the condensation reaction of fatty acid synthesis by the addition to an acyl acceptor of two carbons from malonyl-ACP. Catalyzes the first condensation reaction which initiates fatty acid synthesis and may therefore play a role in governing the total rate of fatty acid production. Possesses both acetoacetyl-ACP synthase and acetyl transacylase activities. Its substrate specificity determines the biosynthesis of branched-chain and/or straight-chain of fatty acids. This is Beta-ketoacyl-[acyl-carrier-protein] synthase III 2 from Bacillus anthracis.